The chain runs to 87 residues: Small ribosomal subunit protein bS16 (87 aa).

This sequence belongs to the bacterial ribosomal protein bS16 family.

The chain is Small ribosomal subunit protein bS16 from Ehrlichia ruminantium (strain Welgevonden).